The chain runs to 534 residues: Serine/threonine-protein kinase ppk15 (534 aa).

Positions 1–40 (MDSDSPILPLSNNPPAARTHDHSQRNNHARHVSSSGTTLF) are disordered. 3 positions are modified to phosphoserine: serine 33, serine 56, and serine 60. The segment at 85–104 (FSSEQNPRRPLTKPSEGVHN) is disordered. A Protein kinase domain is found at 130 to 458 (YLILDTLGHG…PDQAKNHPFI (329 aa)). ATP-binding positions include 136 to 144 (LGHGTFGQV) and lysine 159. Aspartate 257 functions as the Proton acceptor in the catalytic mechanism. Residue tyrosine 291 is modified to Phosphotyrosine.

It belongs to the protein kinase superfamily. Ser/Thr protein kinase family.

The protein localises to the cytoplasm. It is found in the cytoskeleton. The protein resides in the microtubule organizing center. It localises to the spindle pole body. The enzyme catalyses L-seryl-[protein] + ATP = O-phospho-L-seryl-[protein] + ADP + H(+). It carries out the reaction L-threonyl-[protein] + ATP = O-phospho-L-threonyl-[protein] + ADP + H(+). The sequence is that of Serine/threonine-protein kinase ppk15 (ppk15) from Schizosaccharomyces pombe (strain 972 / ATCC 24843) (Fission yeast).